A 217-amino-acid chain; its full sequence is UPF0502 protein Smlt0097 (217 aa).

This sequence belongs to the UPF0502 family.

The polypeptide is UPF0502 protein Smlt0097 (Stenotrophomonas maltophilia (strain K279a)).